Reading from the N-terminus, the 553-residue chain is MELCTQTVPADHEVEITRRVGSHHPTVWGDHFLAYANLSGASEEEEKQHEDLKEEVRKMLVMAPSNALEKLELINTIQCLGVAYHFEHEIESYMCTHYEEYWIGDLHAIALCFRLLRQQGYRVSCDAYKKFTDDQGNFKIELINDVHGMLSLYEAAQFRVHGEEILDEALNFTTTQLKLILPKLSNSPLAQQVANALKFPIKDGIVRVEARKYISFYQQNQNHNQLLLNFAKLDFNILQMLHKKELCDITRWWKELEIVKTLPYVRDRLAEVYFWSLGVYFEPQYSTARKILTKNISMISLIDDTYDIYGTLDELTLFTEAIERWNIDASEQLQLPSYMKIIYCGLLDVYDEIKKDLANENKSFLINYSIIEMKKMVMAYFQEAKWYYGKTIPKMEEYMKNGISTSAYVQIATTSWLGMGNVATKDSFDWIVNEPPILVASSIIARLLNDLLSHEEEQKRGDAPSGVECYMKEYGVTKEEAHIKIRNTIENSWKDLYEEYFKVNGTIIPRVLLMCIINLARVIEFIYKDEDAYTFPKNNLKDVIYRILIDPII.

Positions 303, 307, and 457 each coordinate Mg(2+). Positions 303–307 (DDTYD) match the DDXXD motif motif.

This sequence belongs to the terpene synthase family. Tpsa subfamily. Requires Mg(2+) as cofactor. The cofactor is Mn(2+). As to expression, expressed in leaves, trichomes and flowers.

Its pathway is secondary metabolite biosynthesis; terpenoid biosynthesis. Its function is as follows. Sesquiterpene synthase involved in the biosynthesis of volatile compounds. No activity detected with geranyl diphosphate (GPP) and farnesyl diphosphate (FPP) as substrates. This is Terpene synthase 16 from Solanum lycopersicum (Tomato).